A 282-amino-acid chain; its full sequence is Probable endonuclease 4 (282 aa).

Histidine 69, histidine 109, glutamate 145, aspartate 179, histidine 182, histidine 216, aspartate 229, histidine 231, and glutamate 261 together coordinate Zn(2+).

It belongs to the AP endonuclease 2 family. Zn(2+) is required as a cofactor.

The enzyme catalyses Endonucleolytic cleavage to 5'-phosphooligonucleotide end-products.. In terms of biological role, endonuclease IV plays a role in DNA repair. It cleaves phosphodiester bonds at apurinic or apyrimidinic (AP) sites, generating a 3'-hydroxyl group and a 5'-terminal sugar phosphate. This chain is Probable endonuclease 4, found in Campylobacter hominis (strain ATCC BAA-381 / DSM 21671 / CCUG 45161 / LMG 19568 / NCTC 13146 / CH001A).